The chain runs to 962 residues: Integrator complex subunit 7 (962 aa).

Residues Ser338 and Ser809 each carry the phosphoserine modification.

The protein belongs to the Integrator subunit 7 family. As to quaternary structure, component of the Integrator complex, composed of core subunits INTS1, INTS2, INTS3, INTS4, INTS5, INTS6, INTS7, INTS8, INTS9/RC74, INTS10, INTS11/CPSF3L, INTS12, INTS13, INTS14 and INTS15. The core complex associates with protein phosphatase 2A subunits PPP2CA and PPP2R1A, to form the Integrator-PP2A (INTAC) complex. Interacts with NABP2.

It localises to the nucleus. The protein resides in the chromosome. Its subcellular location is the cytoplasm. Functionally, component of the integrator complex, a multiprotein complex that terminates RNA polymerase II (Pol II) transcription in the promoter-proximal region of genes. The integrator complex provides a quality checkpoint during transcription elongation by driving premature transcription termination of transcripts that are unfavorably configured for transcriptional elongation: the complex terminates transcription by (1) catalyzing dephosphorylation of the C-terminal domain (CTD) of Pol II subunit POLR2A/RPB1 and SUPT5H/SPT5, (2) degrading the exiting nascent RNA transcript via endonuclease activity and (3) promoting the release of Pol II from bound DNA. The integrator complex is also involved in terminating the synthesis of non-coding Pol II transcripts, such as enhancer RNAs (eRNAs), small nuclear RNAs (snRNAs), telomerase RNAs and long non-coding RNAs (lncRNAs). May be not involved in the recruitment of cytoplasmic dynein to the nuclear envelope by different components of the INT complex. Plays a role in DNA damage response (DDR) signaling during the S phase. This is Integrator complex subunit 7 (INTS7) from Bos taurus (Bovine).